The following is a 564-amino-acid chain: Quinone-dependent D-lactate dehydrogenase (564 aa).

The 172-residue stretch at 36–207 (GTGNALAVVR…TNLQEKRYQV (172 aa)) folds into the FAD-binding PCMH-type domain. Residues 70-74 (AANTG), 78-79 (GS), Gly-137, Ser-144, Gly-154, and Val-256 contribute to the FAD site.

The protein belongs to the quinone-dependent D-lactate dehydrogenase family. Requires FAD as cofactor.

It localises to the cell inner membrane. It catalyses the reaction (R)-lactate + a quinone = a quinol + pyruvate. Catalyzes the oxidation of D-lactate to pyruvate. This chain is Quinone-dependent D-lactate dehydrogenase, found in Haemophilus influenzae (strain ATCC 51907 / DSM 11121 / KW20 / Rd).